The primary structure comprises 91 residues: CRISPR-associated endoribonuclease Cas2 2 (91 aa).

D6 is a binding site for Mg(2+).

Belongs to the CRISPR-associated endoribonuclease Cas2 protein family. Homodimer, forms a heterotetramer with a Cas1 homodimer. It depends on Mg(2+) as a cofactor.

Functionally, CRISPR (clustered regularly interspaced short palindromic repeat), is an adaptive immune system that provides protection against mobile genetic elements (viruses, transposable elements and conjugative plasmids). CRISPR clusters contain sequences complementary to antecedent mobile elements and target invading nucleic acids. CRISPR clusters are transcribed and processed into CRISPR RNA (crRNA). Functions as a ssRNA-specific endoribonuclease. Involved in the integration of spacer DNA into the CRISPR cassette. The polypeptide is CRISPR-associated endoribonuclease Cas2 2 (Moorella thermoacetica (strain ATCC 39073 / JCM 9320)).